The following is a 560-amino-acid chain: Arginine--tRNA ligase (560 aa).

The 'HIGH' region motif lies at 122 to 132 (ANPNGPLHVGH).

This sequence belongs to the class-I aminoacyl-tRNA synthetase family.

It localises to the cytoplasm. It catalyses the reaction tRNA(Arg) + L-arginine + ATP = L-arginyl-tRNA(Arg) + AMP + diphosphate. The chain is Arginine--tRNA ligase from Methanosphaera stadtmanae (strain ATCC 43021 / DSM 3091 / JCM 11832 / MCB-3).